The following is a 719-amino-acid chain: Histone-lysine N-methyltransferase SETDB2 (719 aa).

Over residues Ser-72 to Asp-82 the composition is skewed to polar residues. The interval Ser-72–Ser-102 is disordered. An MBD domain is found at Leu-157–Gln-229. Positions Asp-291 to Gly-364 constitute a Pre-SET domain. Residues Cys-293, Cys-295, Cys-299, Cys-305, Cys-307, Cys-345, Cys-349, Cys-351, and Cys-356 each coordinate Zn(2+). In terms of domain architecture, SET spans Val-367–Gly-694. Residues Lys-377–Trp-379 and Asp-418 contribute to the S-adenosyl-L-methionine site. The disordered stretch occupies residues Phe-508–Glu-547. The span at Asp-520–Asn-530 shows a compositional bias: basic and acidic residues. Over residues Lys-532 to Asn-543 the composition is skewed to polar residues. S-adenosyl-L-methionine-binding positions include Arg-648 and Asn-651–His-652. Residues Cys-654, Cys-707, Cys-709, and Cys-714 each coordinate Zn(2+).

The protein belongs to the class V-like SAM-binding methyltransferase superfamily. In terms of tissue distribution, ubiquitous. Highest expression in heart, testis and ovary.

Its subcellular location is the nucleus. It is found in the chromosome. It carries out the reaction N(6),N(6)-dimethyl-L-lysyl(9)-[histone H3] + S-adenosyl-L-methionine = N(6),N(6),N(6)-trimethyl-L-lysyl(9)-[histone H3] + S-adenosyl-L-homocysteine + H(+). Functionally, histone methyltransferase involved in left-right axis specification in early development and mitosis. Specifically trimethylates 'Lys-9' of histone H3 (H3K9me3). H3K9me3 is a specific tag for epigenetic transcriptional repression that recruits HP1 (CBX1, CBX3 and/or CBX5) proteins to methylated histones. Contributes to H3K9me3 in both the interspersed repetitive elements and centromere-associated repeats. Plays a role in chromosome condensation and segregation during mitosis. The chain is Histone-lysine N-methyltransferase SETDB2 (SETDB2) from Homo sapiens (Human).